We begin with the raw amino-acid sequence, 163 residues long: UPF0763 protein CJJ81176_1011 (163 aa).

Belongs to the UPF0763 family.

The protein is UPF0763 protein CJJ81176_1011 of Campylobacter jejuni subsp. jejuni serotype O:23/36 (strain 81-176).